Here is a 300-residue protein sequence, read N- to C-terminus: Eukaryotic translation initiation factor 3 subunit F (300 aa).

An MPN domain is found at 33-169 (VKVHPVALFS…VQCYVSALLG (137 aa)).

It belongs to the eIF-3 subunit F family. Component of the eukaryotic translation initiation factor 3 (eIF-3) complex.

Its subcellular location is the cytoplasm. Its function is as follows. Component of the eukaryotic translation initiation factor 3 (eIF-3) complex, which is involved in protein synthesis of a specialized repertoire of mRNAs and, together with other initiation factors, stimulates binding of mRNA and methionyl-tRNAi to the 40S ribosome. The eIF-3 complex specifically targets and initiates translation of a subset of mRNAs involved in cell proliferation. In Malassezia globosa (strain ATCC MYA-4612 / CBS 7966) (Dandruff-associated fungus), this protein is Eukaryotic translation initiation factor 3 subunit F.